A 358-amino-acid chain; its full sequence is Very long chain fatty acid elongase AAEL008004 (358 aa).

7 consecutive transmembrane segments (helical) span residues 26–46 (WPLM…VYLV), 66–86 (LILY…EIGI), 115–135 (ACWW…FFVM), 147–167 (VIHH…TPGG), 171–191 (FFGL…LFTA), 207–227 (TSLQ…LLFI), and 234–254 (AFVW…NEFY). Polar residues predominate over residues 285–295 (SAVSSNGSAIT). A disordered region spans residues 285–322 (SAVSSNGSAITANGHHGKNGSVHHHSNGSATSNGTSLL). Residues 299–310 (HHGKNGSVHHHS) are compositionally biased toward basic residues. Polar residues predominate over residues 311-322 (NGSATSNGTSLL).

It belongs to the ELO family.

It is found in the membrane. It carries out the reaction a very-long-chain acyl-CoA + malonyl-CoA + H(+) = a very-long-chain 3-oxoacyl-CoA + CO2 + CoA. Its function is as follows. Could be implicated in synthesis of very long chain fatty acids. The sequence is that of Very long chain fatty acid elongase AAEL008004 from Aedes aegypti (Yellowfever mosquito).